Consider the following 206-residue polypeptide: Ras-related protein Ral-A (206 aa).

Residues glycine 24–alanine 29, valine 40–threonine 46, and asparagine 127–aspartate 130 contribute to the GTP site. An Effector region motif is present at residues tyrosine 43–tyrosine 51. The (Microbial infection) O-linked (Glc) threonine; by P.sordellii toxin TcsL glycan is linked to threonine 46. A Phosphoserine; by AURKA modification is found at serine 194. Cysteine 203 is subject to Cysteine methyl ester. The S-geranylgeranyl cysteine moiety is linked to residue cysteine 203. Positions cysteine 204–leucine 206 are cleaved as a propeptide — removed in mature form.

The protein belongs to the small GTPase superfamily. Ras family. In terms of assembly, interacts (via effector domain) with RALBP1; during mitosis, recruits RALBP1 to the mitochondrion where it promotes DNM1L phosphorylation and mitochondrial fission. Interacts with EXOC2/Sec5 and EXOC8/Exo84; binding to EXOC2 and EXOC8 is mutually exclusive. Interacts with Clostridium exoenzyme C3. Interacts with RALGPS1. Interacts with LPAR1 and LPAR2. Interacts with GRK2 in response to LPAR1 activation. RALA and GRK2 binding to LPAR1 is mutually exclusive. Interacts with CDC42. Post-translationally, phosphorylated. Phosphorylation at Ser-194 by AURKA/Aurora kinase A, during mitosis, induces RALA localization to the mitochondrion where it regulates mitochondrial fission. Prenylation is essential for membrane localization. The geranylgeranylated form and the farnesylated mutant do not undergo alternative prenylation in response to geranylgeranyltransferase I inhibitors (GGTIs) and farnesyltransferase I inhibitors (FTIs). In terms of processing, (Microbial infection) Glucosylated at Thr-46 by P.sordellii toxin TcsL from strain 6018. Monoglucosylation completely prevents the recognition of the downstream effector, blocking the GTPases in their inactive form. Not glucosylated by TcsL from strain VPI 9048.

It localises to the cell membrane. The protein resides in the cleavage furrow. Its subcellular location is the midbody. It is found in the midbody ring. The protein localises to the mitochondrion. It carries out the reaction GTP + H2O = GDP + phosphate + H(+). Its activity is regulated as follows. Alternates between an inactive form bound to GDP and an active form bound to GTP. Activated by a guanine nucleotide-exchange factor (GEF) and inactivated by a GTPase-activating protein (GAP). Its function is as follows. Multifunctional GTPase involved in a variety of cellular processes including gene expression, cell migration, cell proliferation, oncogenic transformation and membrane trafficking. Accomplishes its multiple functions by interacting with distinct downstream effectors. Acts as a GTP sensor for GTP-dependent exocytosis of dense core vesicles. The RALA-exocyst complex regulates integrin-dependent membrane raft exocytosis and growth signaling. Key regulator of LPAR1 signaling and competes with GRK2 for binding to LPAR1 thus affecting the signaling properties of the receptor. Required for anchorage-independent proliferation of transformed cells. During mitosis, supports the stabilization and elongation of the intracellular bridge between dividing cells. Cooperates with EXOC2 to recruit other components of the exocyst to the early midbody. During mitosis, also controls mitochondrial fission by recruiting to the mitochondrion RALBP1, which mediates the phosphorylation and activation of DNM1L by the mitotic kinase cyclin B-CDK1. In Homo sapiens (Human), this protein is Ras-related protein Ral-A (RALA).